The sequence spans 416 residues: Pectin acetylesterase 10 (416 aa).

Positions 1-20 are cleaved as a signal peptide; sequence MRKLFLLGFIVAGLVLGNEA. Asn27 carries N-linked (GlcNAc...) asparagine glycosylation. Active-site charge relay system residues include Ser198, Asp294, and His361.

The protein belongs to the pectinacetylesterase family.

The protein resides in the secreted. It is found in the cell wall. Its function is as follows. Hydrolyzes acetyl esters in homogalacturonan regions of pectin. In type I primary cell wall, galacturonic acid residues of pectin can be acetylated at the O-2 and O-3 positions. Decreasing the degree of acetylation of pectin gels in vitro alters their physical properties. The polypeptide is Pectin acetylesterase 10 (Arabidopsis thaliana (Mouse-ear cress)).